Consider the following 497-residue polypeptide: 3-octaprenyl-4-hydroxybenzoate carboxy-lyase (497 aa).

Asparagine 175 is a Mn(2+) binding site. Prenylated FMN contacts are provided by residues 178-180 (IYR), 192-194 (RWL), and 197-198 (RG). Position 241 (glutamate 241) interacts with Mn(2+). The active-site Proton donor is aspartate 290.

This sequence belongs to the UbiD family. As to quaternary structure, homohexamer. Requires prenylated FMN as cofactor. The cofactor is Mn(2+).

It localises to the cell membrane. The enzyme catalyses a 4-hydroxy-3-(all-trans-polyprenyl)benzoate + H(+) = a 2-(all-trans-polyprenyl)phenol + CO2. The protein operates within cofactor biosynthesis; ubiquinone biosynthesis. In terms of biological role, catalyzes the decarboxylation of 3-octaprenyl-4-hydroxy benzoate to 2-octaprenylphenol, an intermediate step in ubiquinone biosynthesis. This chain is 3-octaprenyl-4-hydroxybenzoate carboxy-lyase, found in Shigella dysenteriae serotype 1 (strain Sd197).